Reading from the N-terminus, the 135-residue chain is Ribosome-binding factor A (135 aa).

The protein belongs to the RbfA family. In terms of assembly, monomer. Binds 30S ribosomal subunits, but not 50S ribosomal subunits or 70S ribosomes.

The protein resides in the cytoplasm. One of several proteins that assist in the late maturation steps of the functional core of the 30S ribosomal subunit. Associates with free 30S ribosomal subunits (but not with 30S subunits that are part of 70S ribosomes or polysomes). Required for efficient processing of 16S rRNA. May interact with the 5'-terminal helix region of 16S rRNA. This chain is Ribosome-binding factor A, found in Novosphingobium aromaticivorans (strain ATCC 700278 / DSM 12444 / CCUG 56034 / CIP 105152 / NBRC 16084 / F199).